The following is a 390-amino-acid chain: Homoserine O-acetyltransferase (390 aa).

An AB hydrolase-1 domain is found at 55 to 366; the sequence is NAILINHAFS…ESDCGHDAFL (312 aa). Ser-163 serves as the catalytic Nucleophile. Arg-232 lines the substrate pocket. Residues Asp-329 and His-362 contribute to the active site. Asp-363 is a substrate binding site.

It belongs to the AB hydrolase superfamily. MetX family. In terms of assembly, homodimer.

The protein localises to the cytoplasm. It carries out the reaction L-homoserine + acetyl-CoA = O-acetyl-L-homoserine + CoA. The protein operates within amino-acid biosynthesis; L-methionine biosynthesis via de novo pathway; O-acetyl-L-homoserine from L-homoserine: step 1/1. In terms of biological role, transfers an acetyl group from acetyl-CoA to L-homoserine, forming acetyl-L-homoserine. The polypeptide is Homoserine O-acetyltransferase (Desulfotalea psychrophila (strain LSv54 / DSM 12343)).